A 121-amino-acid polypeptide reads, in one-letter code: MSITKDQIIDAVAELSVMEVVELITAMEEKFGVSAAAAVAGAAGPAEVVEEQTEFDVIMTTFGENKVKAIKAVRAATGLGLKEAKDAVESCPVAIKEGISKADAEALKAVLEEIGATVELK.

It belongs to the bacterial ribosomal protein bL12 family. In terms of assembly, homodimer. Part of the ribosomal stalk of the 50S ribosomal subunit. Forms a multimeric L10(L12)X complex, where L10 forms an elongated spine to which 2 to 4 L12 dimers bind in a sequential fashion. Binds GTP-bound translation factors.

Its function is as follows. Forms part of the ribosomal stalk which helps the ribosome interact with GTP-bound translation factors. Is thus essential for accurate translation. In Psychromonas ingrahamii (strain DSM 17664 / CCUG 51855 / 37), this protein is Large ribosomal subunit protein bL12.